The following is a 24-amino-acid chain: Brevinin-1HSa (24 aa).

A disulfide bridge links Cys18 with Cys24.

As to expression, expressed by the skin glands.

It is found in the secreted. In terms of biological role, has antibacterial activity against the Gram-positive bacterium S.aureus ATCC 25923 (MIC=3 uM) and the Gram-negative bacterium E.coli ATCC 25726 (MIC=24 uM). This Odorrana hosii (Hose's rock frog) protein is Brevinin-1HSa.